A 652-amino-acid chain; its full sequence is Putative asparagine synthetase [glutamine-hydrolyzing] (652 aa).

Cys2 functions as the For GATase activity in the catalytic mechanism. The 230-residue stretch at 2 to 231 (CGLLAFVAAP…SGCFARIRAD (230 aa)) folds into the Glutamine amidotransferase type-2 domain. Residues 60-64 (RLSII), 89-91 (NGE), and Asp115 contribute to the L-glutamine site. 382-383 (SG) is a binding site for ATP.

This sequence belongs to the asparagine synthetase family.

The enzyme catalyses L-aspartate + L-glutamine + ATP + H2O = L-asparagine + L-glutamate + AMP + diphosphate + H(+). It functions in the pathway amino-acid biosynthesis; L-asparagine biosynthesis; L-asparagine from L-aspartate (L-Gln route): step 1/1. This chain is Putative asparagine synthetase [glutamine-hydrolyzing] (asnB), found in Mycobacterium bovis (strain ATCC BAA-935 / AF2122/97).